The sequence spans 712 residues: Dynein regulatory complex protein 1 (712 aa).

Residues 1–34 (MNPPGSLGVLEEKEEEHLAPPILGPSIHSDNPQE) are disordered. Residues 100-388 (AADIREIHRR…QFKELQKAMR (289 aa)) adopt a coiled-coil conformation. Residues 557–591 (HSPSSQEPLDLRAEKERSLVDGKSQEKEPPPSPKL) are disordered. Over residues 565 to 585 (LDLRAEKERSLVDGKSQEKEP) the composition is skewed to basic and acidic residues. A coiled-coil region spans residues 663–698 (LTQRAELLIENSSLERQNTELQQLLQQYLDTKINSE).

The protein belongs to the DRC1 family. In terms of assembly, component of the nexin-dynein regulatory complex (N-DRC). Interacts with CCDC65/DRC2, DRC3, GAS8/DRC4 and TCTE1/DRC5.

Its subcellular location is the cytoplasm. The protein resides in the cytoskeleton. It is found in the cilium axoneme. The protein localises to the flagellum axoneme. In terms of biological role, component of the nexin-dynein regulatory complex (N-DRC) a key regulator of ciliary/flagellar motility which maintains the alignment and integrity of the distal axoneme and regulates microtubule sliding in motile axonemes. Plays a critical role in the assembly of N-DRC and also stabilizes the assembly of multiple inner dynein arms and radial spokes. Coassembles with CCDC65/DRC2 to form a central scaffold needed for assembly of the N-DRC and its attachment to the outer doublet microtubules. This chain is Dynein regulatory complex protein 1 (DRC1), found in Bos taurus (Bovine).